We begin with the raw amino-acid sequence, 441 residues long: N-succinylarginine dihydrolase (441 aa).

Substrate is bound by residues 19 to 28 (AGLSFGNEAS), Asn110, and 137 to 138 (HR). The active site involves Glu174. Arg212 lines the substrate pocket. His248 is a catalytic residue. Substrate is bound by residues Asp250 and Asn359. The Nucleophile role is filled by Cys365.

The protein belongs to the succinylarginine dihydrolase family. Homodimer.

It catalyses the reaction N(2)-succinyl-L-arginine + 2 H2O + 2 H(+) = N(2)-succinyl-L-ornithine + 2 NH4(+) + CO2. The protein operates within amino-acid degradation; L-arginine degradation via AST pathway; L-glutamate and succinate from L-arginine: step 2/5. Its function is as follows. Catalyzes the hydrolysis of N(2)-succinylarginine into N(2)-succinylornithine, ammonia and CO(2). This Erwinia tasmaniensis (strain DSM 17950 / CFBP 7177 / CIP 109463 / NCPPB 4357 / Et1/99) protein is N-succinylarginine dihydrolase.